A 365-amino-acid polypeptide reads, in one-letter code: 3-isopropylmalate dehydrogenase (365 aa).

Residue 80 to 91 (GPKWGTGSVRPE) participates in NAD(+) binding. Substrate contacts are provided by R98, R108, R137, and D226. Residues D226, D251, and D255 each coordinate Mg(2+). Position 290-301 (290-301 (GSAPDLPKGKVN)) interacts with NAD(+).

The protein belongs to the isocitrate and isopropylmalate dehydrogenases family. As to quaternary structure, homodimer. It depends on Mg(2+) as a cofactor. Mn(2+) serves as cofactor.

Its subcellular location is the cytoplasm. The catalysed reaction is (2R,3S)-3-isopropylmalate + NAD(+) = 4-methyl-2-oxopentanoate + CO2 + NADH. Its pathway is amino-acid biosynthesis; L-leucine biosynthesis; L-leucine from 3-methyl-2-oxobutanoate: step 3/4. Catalyzes the oxidation of 3-carboxy-2-hydroxy-4-methylpentanoate (3-isopropylmalate) to 3-carboxy-4-methyl-2-oxopentanoate. The product decarboxylates to 4-methyl-2 oxopentanoate. The chain is 3-isopropylmalate dehydrogenase (LEU2) from Maudiozyma exigua (Yeast).